The chain runs to 342 residues: Small GTPase LIP1 (342 aa).

Positions 12-285 are small GTPase-like; sequence KEQILAPLCG…FHGDPYKYNN (274 aa). GTP-binding positions include 29–36, 90–94, and 160–163; these read GDSGVGKT, DVSGH, and NKAD. Disordered stretches follow at residues 274–313 and 323–342; these read TSFHGDPYKYNNTIPPLPAQRNLTPPPTLYPQQPVSTPDN and SVQETTNNGSARSKRMDINV. Residues 323–333 are compositionally biased toward polar residues; that stretch reads SVQETTNNGSA.

Belongs to the small GTPase superfamily.

The protein resides in the nucleus. Its subcellular location is the cytoplasm. Functionally, functional small GTPase that acts as a negative factor controlling the light-dependent period shortening of circadian rhythms and light-induced phase resetting during the subjective night. May protect the clock from excessive or mistimed light. Suppresses red and blue light-mediated photomorphogenesis and is required for light-controlled inhibition of endoreplication and tolerance to salt stress. The entrainment of the circadian clock is independent from the other pleiotropic effects. Could be a regulator of seedling establishment. The chain is Small GTPase LIP1 from Arabidopsis thaliana (Mouse-ear cress).